Consider the following 558-residue polypeptide: Acylase ACY 1 proenzyme (558 aa).

T368 functions as the Nucleophile in the catalytic mechanism.

Belongs to the gamma-glutamyltransferase family. As to quaternary structure, dimer of two non-identical chains processed from the same precursor.

The catalysed reaction is (7R)-7-(4-carboxybutanamido)cephalosporanate + H2O = (7R)-7-aminocephalosporanate + glutarate. It carries out the reaction an N-terminal (5-L-glutamyl)-[peptide] + an alpha-amino acid = 5-L-glutamyl amino acid + an N-terminal L-alpha-aminoacyl-[peptide]. The enzyme catalyses glutathione + H2O = L-cysteinylglycine + L-glutamate. It catalyses the reaction an S-substituted glutathione + H2O = an S-substituted L-cysteinylglycine + L-glutamate. Besides the cephalosporin acylase I activity which converts GL-7ACA into 7-ACA; this enzyme displays some gamma glutamyltranspeptidase activity. The polypeptide is Acylase ACY 1 proenzyme (acyI) (Pseudomonas sp. (strain SE83)).